Consider the following 479-residue polypeptide: Glutamate--tRNA ligase (479 aa).

Positions 9-19 match the 'HIGH' region motif; the sequence is PSPTGNLHIGT. Positions 243–247 match the 'KMSKS' region motif; sequence KLSKR. Lys246 lines the ATP pocket.

The protein belongs to the class-I aminoacyl-tRNA synthetase family. Glutamate--tRNA ligase type 1 subfamily. Monomer.

It is found in the cytoplasm. The enzyme catalyses tRNA(Glu) + L-glutamate + ATP = L-glutamyl-tRNA(Glu) + AMP + diphosphate. Its function is as follows. Catalyzes the attachment of glutamate to tRNA(Glu) in a two-step reaction: glutamate is first activated by ATP to form Glu-AMP and then transferred to the acceptor end of tRNA(Glu). In Synechococcus sp. (strain JA-3-3Ab) (Cyanobacteria bacterium Yellowstone A-Prime), this protein is Glutamate--tRNA ligase.